The sequence spans 183 residues: Mast cell-expressed membrane protein 1 (183 aa).

Residues 1–26 (MHASASQDKNRRKPGHDEGAHNPDYE) form a disordered region. Residues 1-70 (MHASASQDKN…PPWLYRTIMM (70 aa)) lie on the Cytoplasmic side of the membrane. Over residues 15–24 (GHDEGAHNPD) the composition is skewed to basic and acidic residues. A helical; Signal-anchor for type II membrane protein transmembrane segment spans residues 71–91 (LYVLLALVFLSCIVLSALVLV). Residues 92–183 (KNSEMSKELW…EKKAQPQPST (92 aa)) are Extracellular-facing. Asn109 carries an N-linked (GlcNAc...) asparagine glycan.

The protein localises to the membrane. The sequence is that of Mast cell-expressed membrane protein 1 from Mus musculus (Mouse).